The primary structure comprises 205 residues: LexA repressor (205 aa).

The H-T-H motif DNA-binding region spans 28-48 (VREIGEAVGLASSSTVHGHLA). Residues S127 and K165 each act as for autocatalytic cleavage activity in the active site.

Belongs to the peptidase S24 family. In terms of assembly, homodimer. Post-translationally, following treatment with mitomycin C protein levels begin to decrease after a 5-min lag and do not return to their original levels for at least 90 minutes.

It carries out the reaction Hydrolysis of Ala-|-Gly bond in repressor LexA.. Its function is as follows. Represses dinA, dinB, dinC, recA genes and itself by binding to the 14 bp palindromic sequence 5'-CGAACNNNNGTTCG-3'; some genes have a tandem consensus sequence and their binding is cooperative. In the presence of single-stranded DNA, RecA interacts with LexA causing an autocatalytic cleavage which disrupts the DNA-binding part of LexA, leading to derepression of the SOS regulon and eventually DNA repair; autocleavage is maximal at pH 11 in the absence of RecA and ssDNA. The chain is LexA repressor from Bacillus subtilis (strain 168).